Here is a 235-residue protein sequence, read N- to C-terminus: Ribonuclease 3 (235 aa).

In terms of domain architecture, RNase III spans 7–134 (LKDLQNKIEI…LIASIYLDKG (128 aa)). Residue Glu47 coordinates Mg(2+). The active site involves Asp51. 2 residues coordinate Mg(2+): Asp120 and Glu123. Glu123 is a catalytic residue. Residues 161 to 230 (DYKTKLQEII…AKKAIENMEV (70 aa)) enclose the DRBM domain.

Belongs to the ribonuclease III family. In terms of assembly, homodimer. Mg(2+) is required as a cofactor.

The protein localises to the cytoplasm. It carries out the reaction Endonucleolytic cleavage to 5'-phosphomonoester.. In terms of biological role, digests double-stranded RNA. Involved in the processing of primary rRNA transcript to yield the immediate precursors to the large and small rRNAs (23S and 16S). Processes some mRNAs, and tRNAs when they are encoded in the rRNA operon. Processes pre-crRNA and tracrRNA of type II CRISPR loci if present in the organism. The polypeptide is Ribonuclease 3 (Clostridium tetani (strain Massachusetts / E88)).